The chain runs to 467 residues: MRTAPSLRRCVCLLLAAILDLARGYLTVNIEPLPPVVAGDAVTLKCNFKTDGRMREIVWYRVTDGGTIKQKIFTFDAMFSTNYSHMENYRKREDLVYQSTVRLPEVRISDNGPYECHVGIYDRATREKVVLASGNIFLNVMAPPTSIEVVAADTPAPFSRYQAQNFTLVCIVSGGKPAPMVYFKRDGEPIDAVPLSEPPAASSGPLQDSRPFRSLLHRDLDDTKMQKSLSLLDAENRGGRPYTERPSRGLTPDPNILLQPTTENIPETVVSREFPRWVHSAEPTYFLRHSRTPSSDGTVEVRALLTWTLNPQIDNEALFSCEVKHPALSMPMQAEVTLVAPKGPKIVMTPSRARVGDTVRILVHGFQNEVFPEPMFTWTRVGSRLLDGSAEFDGKELVLERVPAELNGSMYRCTAQNPLGSTDTHTRLIVFENPNIPRGTEDSNGSIGPTGARLTLVLALTVILELT.

A signal peptide spans 1-24 (MRTAPSLRRCVCLLLAAILDLARG). One can recognise an Ig-like 1 domain in the interval 25–132 (YLTVNIEPLP…RATREKVVLA (108 aa)). C46 and C116 are joined by a disulfide. N-linked (GlcNAc...) asparagine glycans are attached at residues N82 and N165. Positions 229 to 259 (LSLLDAENRGGRPYTERPSRGLTPDPNILLQ) are disordered. The span at 234–247 (AENRGGRPYTERPS) shows a compositional bias: basic and acidic residues. In terms of domain architecture, Ig-like 2 spans 344-429 (PKIVMTPSRA…GSTDTHTRLI (86 aa)). N-linked (GlcNAc...) asparagine glycans are attached at residues N407 and N444.

In terms of assembly, interacts (Ig-like 1 domain) with NRXN2 (via Laminin G-like 1 domain) in a trans-interaction manner.

The protein localises to the postsynaptic cell membrane. In terms of biological role, involved in synaptic inhibition in the brain. Selectively regulates inhibitory presynaptic differentiation through interacting with presynaptic NRXN2. This is Immunoglobulin superfamily member 21 from Homo sapiens (Human).